The primary structure comprises 426 residues: Serine--tRNA ligase (426 aa).

231–233 is a binding site for L-serine; it reads TAE. Residue 262-264 coordinates ATP; the sequence is RSE. L-serine is bound at residue E285. 349–352 contributes to the ATP binding site; it reads EISS. S385 lines the L-serine pocket.

Belongs to the class-II aminoacyl-tRNA synthetase family. Type-1 seryl-tRNA synthetase subfamily. As to quaternary structure, homodimer. The tRNA molecule binds across the dimer.

The protein localises to the cytoplasm. It catalyses the reaction tRNA(Ser) + L-serine + ATP = L-seryl-tRNA(Ser) + AMP + diphosphate + H(+). The enzyme catalyses tRNA(Sec) + L-serine + ATP = L-seryl-tRNA(Sec) + AMP + diphosphate + H(+). It functions in the pathway aminoacyl-tRNA biosynthesis; selenocysteinyl-tRNA(Sec) biosynthesis; L-seryl-tRNA(Sec) from L-serine and tRNA(Sec): step 1/1. In terms of biological role, catalyzes the attachment of serine to tRNA(Ser). Is also able to aminoacylate tRNA(Sec) with serine, to form the misacylated tRNA L-seryl-tRNA(Sec), which will be further converted into selenocysteinyl-tRNA(Sec). This is Serine--tRNA ligase from Brevibacillus brevis (strain 47 / JCM 6285 / NBRC 100599).